We begin with the raw amino-acid sequence, 131 residues long: MSIVLRKSNKKNKNCITSKFYTIHIIKISTPVFRAPIAIGESPYVEWSCLQVVFRKDMVTKKTTFAQLITRLNHFLCQALKRRDSKTYILCRTAVFGAMTPFSPRKSHINNKLPMQPRKKKIVIIYVVRFH.

The polypeptide is Bypass of stop codon protein 4 (BSC4) (Saccharomyces cerevisiae (strain ATCC 204508 / S288c) (Baker's yeast)).